The following is a 600-amino-acid chain: Adenine deaminase 4 (600 aa).

Belongs to the metallo-dependent hydrolases superfamily. Adenine deaminase family. The cofactor is Mn(2+).

It carries out the reaction adenine + H2O + H(+) = hypoxanthine + NH4(+). The protein is Adenine deaminase 4 of Rhizobium meliloti (strain 1021) (Ensifer meliloti).